The following is a 973-amino-acid chain: Sensor histidine kinase TmoS (973 aa).

Residues Arg32 to Ser103 enclose the PAS 1 domain. One can recognise a PAC 1 domain in the interval Val108 to Leu162. In terms of domain architecture, Histidine kinase 1 spans Lys187–Ala405. His190 is modified (phosphohistidine; by autocatalysis). Positions Arg452–Ile567 constitute a Response regulatory domain. Asp500 is modified (4-aspartylphosphate). Residues Ser611 to Gly681 enclose the PAS 2 domain. Positions Tyr685 to Gln737 constitute a PAC 2 domain. In terms of domain architecture, Histidine kinase 2 spans Tyr757–Ser973. His760 is modified (phosphohistidine).

Autophosphorylated. Activation requires a sequential transfer of a phosphate group from a His in the primary transmitter domain, to an Asp in the receiver domain and to a His in the secondary transmitter domain.

It is found in the cytoplasm. It catalyses the reaction ATP + protein L-histidine = ADP + protein N-phospho-L-histidine.. Its activity is regulated as follows. Activity is regulated by agonists and antagonists. Binding of agonists such as toluene or benzene to TmoS stimulates autophosphorylation. Toluene causes the most pronounced increase, followed by benzene, chlorobenzene and ethylbenzene. Activity is inhibited by antagonists such as o-xylene, o-chlorotoluene and trimethylbenzene isomers, which bind to TmoS but do not stimulate autophosphorylation. Functionally, member of the two-component regulatory system TmoS/TmoT involved in the regulation of toluene degradation. Probably phosphorylates TmoT via a four-step phosphorelay in response to toluene. Can also be induced by benzene and ethylbenzene. In Ectopseudomonas mendocina (Pseudomonas mendocina), this protein is Sensor histidine kinase TmoS (tmoS).